The sequence spans 565 residues: Periplasmic trehalase (565 aa).

Residues 1-30 (MKSPTPSRPQKMALIPACIFLCFAALSVQA) form the signal peptide. Substrate contacts are provided by residues Arg-152, 159 to 160 (WD), Asn-196, 205 to 207 (RSQ), 277 to 279 (RPE), and Gly-310. Residues Asp-312 and Glu-496 each act as proton donor/acceptor in the active site. A substrate-binding site is contributed by Glu-511. The segment at 539–565 (CDNVPATRPLSESTTQPLKQKEAEPTP) is disordered.

It belongs to the glycosyl hydrolase 37 family. Monomer.

The protein resides in the periplasm. The enzyme catalyses alpha,alpha-trehalose + H2O = alpha-D-glucose + beta-D-glucose. In terms of biological role, provides the cells with the ability to utilize trehalose at high osmolarity by splitting it into glucose molecules that can subsequently be taken up by the phosphotransferase-mediated uptake system. This Escherichia coli O7:K1 (strain IAI39 / ExPEC) protein is Periplasmic trehalase.